The chain runs to 93 residues: Integration host factor subunit beta (93 aa).

The protein belongs to the bacterial histone-like protein family. As to quaternary structure, heterodimer of an alpha and a beta chain.

In terms of biological role, this protein is one of the two subunits of integration host factor, a specific DNA-binding protein that functions in genetic recombination as well as in transcriptional and translational control. The chain is Integration host factor subunit beta from Rhodospirillum centenum (strain ATCC 51521 / SW).